A 285-amino-acid chain; its full sequence is UstYa family oxidase phomYe (285 aa).

A helical membrane pass occupies residues 32 to 54 (LFYGWKGIAFLSTLTNVLFISGF). A disordered region spans residues 143–165 (YGFGTPLTGPGSEGNEHDPTPWT). Residues 177-181 (HQLHC) carry the HXXHC 1 motif. A glycan (N-linked (GlcNAc...) asparagine) is linked at Asn202. The short motif at 209–213 (HVDHC) is the HXXHC 2 element.

The protein belongs to the ustYa family.

It localises to the membrane. The protein operates within mycotoxin biosynthesis. In terms of biological role, ustYa family oxidase; part of the gene cluster that mediates the biosynthesis of the phomopsins, a group of hexapeptide mycotoxins which infects lupins and causes lupinosis disease in livestock. Within the pathway, phomYe catalyzes the desaturation of the Pro moiety into 3,4-dehydroproline (dPro). The pathway starts with the processing of the precursor phomA by several endopeptidases including kexin proteases as well as the cluster-specific S41 family peptidase phomP1 and the oligopeptidase phomG to produce 10 identical copies of the hexapeptide Tyr-Val-Ile-Pro-Ile-Asp. After being excised from the precursor peptide, the core peptides are cyclized and modified post-translationally by enzymes encoded within the gene cluster. The timing and order of proteolysis of the phomA precursor and PTMs are still unknown. Two tyrosinase-like enzymes, phomQ1 and phomQ2, catalyze the chlorination and hydroxylation of Tyr, respectively. PhomYb, is proposed to be involved in the construction of the macrocyclic structure. The other 4 ustYa family proteins may be involved in PTMs that generate the unique structure of phomopsin A. PhomYa is required for the hydroxylation of C-beta of Tyr. PhomYc, phomYd, and phomYe are responsible for the biosynthesis of 2,3-dehydroisoleucine (dIle), 2,3-dehydroaspartic acid (dAsp), and 3,4-dehydroproline (dPro), respectively. While dIle formation by phomYc is indispensable for the installation of dAsp by phomYd, the order of the other PTMs have not been elucidated yet. Most of the biosynthetic enzymes likely have broad substrate specificity, and thus, there might be a metabolic grid from a precursor to phomopsin A. The enzyme(s) responsible for the biosynthesis of 3,4-dehydrovaline (dVal) have also not been identified yet. Finally, phomM acts as an S-adenosylmethionine-dependent alpha-N-methyltransferase that catalyzes two successive N-methylation reactions, converting N-desmethyl-phomopsin A to phomopsin A and phomopsin A further to an N,N-dimethylated congener called phomopsin E. The protein is UstYa family oxidase phomYe of Diaporthe leptostromiformis (Lupinosis disease fungus).